Consider the following 205-residue polypeptide: Inactive ribonuclease-like protein 9 (205 aa).

Positions 1-24 (MMLITTHSLLLLLLLLQLLQPLQF) are cleaved as a signal peptide. Intrachain disulfides connect Cys97–Cys152, Cys115–Cys167, and Cys122–Cys129. N-linked (GlcNAc...) asparagine glycans are attached at residues Asn130 and Asn142.

It belongs to the pancreatic ribonuclease family.

Its subcellular location is the secreted. Its function is as follows. Does not exhibit any ribonuclease activity. The sequence is that of Inactive ribonuclease-like protein 9 (RNASE9) from Cebus capucinus (White-faced sapajou).